We begin with the raw amino-acid sequence, 415 residues long: Histidine--tRNA ligase (415 aa).

Belongs to the class-II aminoacyl-tRNA synthetase family. Homodimer.

Its subcellular location is the cytoplasm. It carries out the reaction tRNA(His) + L-histidine + ATP = L-histidyl-tRNA(His) + AMP + diphosphate + H(+). This Clostridium botulinum (strain Loch Maree / Type A3) protein is Histidine--tRNA ligase.